Here is a 224-residue protein sequence, read N- to C-terminus: Ribonuclease T (224 aa).

Residues 32 to 206 (VVVDVETGGF…YDTEKTAELF (175 aa)) enclose the Exonuclease domain. Mg(2+) contacts are provided by D35, E37, H193, and D198. The Proton donor/acceptor role is filled by H193.

This sequence belongs to the RNase T family. In terms of assembly, homodimer. Requires Mg(2+) as cofactor.

Trims short 3' overhangs of a variety of RNA species, leaving a one or two nucleotide 3' overhang. Responsible for the end-turnover of tRNA: specifically removes the terminal AMP residue from uncharged tRNA (tRNA-C-C-A). Also appears to be involved in tRNA biosynthesis. In Pseudomonas paraeruginosa (strain DSM 24068 / PA7) (Pseudomonas aeruginosa (strain PA7)), this protein is Ribonuclease T.